A 424-amino-acid chain; its full sequence is Spermatogenesis-associated protein 2-like protein (424 aa).

Disordered regions lie at residues Glu-233 to Ala-258 and Thr-273 to Leu-300. Ser-327 is modified (phosphoserine).

The protein belongs to the SPATA2 family.

The chain is Spermatogenesis-associated protein 2-like protein from Homo sapiens (Human).